The following is a 63-amino-acid chain: Large ribosomal subunit protein uL29 (63 aa).

Belongs to the universal ribosomal protein uL29 family.

The sequence is that of Large ribosomal subunit protein uL29 from Yersinia enterocolitica serotype O:8 / biotype 1B (strain NCTC 13174 / 8081).